The chain runs to 578 residues: tRNA (guanine(26)-N(2))-dimethyltransferase (578 aa).

A Trm1 methyltransferase domain is found at 18-451; that stretch reads NVIRERNAEI…APPAVLWDIL (434 aa). Position 43 (R43) interacts with S-adenosyl-L-methionine. The tract at residues 63 to 92 is disordered; the sequence is EKALKKQRKKVKEQEDEKTTPVPEDPPVYE. S-adenosyl-L-methionine is bound by residues R113 and D131. 4 residues coordinate Zn(2+): C295, C298, C335, and C338. Positions 491 to 578 are disordered; the sequence is EANPKSRKSA…PKQPKLEATA (88 aa). Over residues 564–578 the composition is skewed to basic and acidic residues; that stretch reads DVEHLPKQPKLEATA.

Belongs to the class I-like SAM-binding methyltransferase superfamily. Trm1 family.

The catalysed reaction is guanosine(26) in tRNA + 2 S-adenosyl-L-methionine = N(2)-dimethylguanosine(26) in tRNA + 2 S-adenosyl-L-homocysteine + 2 H(+). In terms of biological role, dimethylates a single guanine residue at position 26 of most tRNAs using S-adenosyl-L-methionine as donor of the methyl groups. This chain is tRNA (guanine(26)-N(2))-dimethyltransferase, found in Drosophila melanogaster (Fruit fly).